The primary structure comprises 72 residues: Large ribosomal subunit protein uL29 (72 aa).

Belongs to the universal ribosomal protein uL29 family.

In Rhodopirellula baltica (strain DSM 10527 / NCIMB 13988 / SH1), this protein is Large ribosomal subunit protein uL29.